Here is a 515-residue protein sequence, read N- to C-terminus: Fatty acyl-CoA reductase 2 (515 aa).

The Cytoplasmic portion of the chain corresponds to Met1 to Arg464. The helical transmembrane segment at Asn465–Ala484 threads the bilayer. At Arg485 to Val515 the chain is on the peroxisomal side.

This sequence belongs to the fatty acyl-CoA reductase family.

Its subcellular location is the peroxisome membrane. It catalyses the reaction a long-chain fatty acyl-CoA + 2 NADPH + 2 H(+) = a long-chain primary fatty alcohol + 2 NADP(+) + CoA. The catalysed reaction is a very long-chain fatty acyl-CoA + 2 NADPH + 2 H(+) = a very long-chain primary fatty alcohol + 2 NADP(+) + CoA. It carries out the reaction an ultra-long-chain fatty acyl-CoA + 2 NADPH + 2 H(+) = an ultra long-chain primary fatty alcohol + 2 NADP(+) + CoA. The enzyme catalyses hexadecanoyl-CoA + 2 NADPH + 2 H(+) = hexadecan-1-ol + 2 NADP(+) + CoA. It catalyses the reaction octadecanoyl-CoA + 2 NADPH + 2 H(+) = octadecan-1-ol + 2 NADP(+) + CoA. The catalysed reaction is eicosanoyl-CoA + 2 NADPH + 2 H(+) = eicosan-1-ol + 2 NADP(+) + CoA. It carries out the reaction docosanoyl-CoA + 2 NADPH + 2 H(+) = docosan-1-ol + 2 NADP(+) + CoA. The enzyme catalyses tetracosanoyl-CoA + 2 NADPH + 2 H(+) = tetracosan-1-ol + 2 NADP(+) + CoA. It catalyses the reaction hexacosanoyl-CoA + 2 NADPH + 2 H(+) = hexacosan-1-ol + 2 NADP(+) + CoA. The catalysed reaction is octacosanoyl-CoA + 2 NADPH + 2 H(+) = octacosan-1-ol + 2 NADP(+) + CoA. It carries out the reaction triacontanoyl-CoA + 2 NADPH + 2 H(+) = triacontan-1-ol + 2 NADP(+) + CoA. The enzyme catalyses 18-methylnonadecanoyl-CoA + 2 NADPH + 2 H(+) = 18-methylnonadecan-1-ol + 2 NADP(+) + CoA. It catalyses the reaction 20-methylheneicosanoyl-CoA + 2 NADPH + 2 H(+) = 20-methylheneicosan-1-ol + 2 NADP(+) + CoA. The catalysed reaction is 22-methyltricosanoyl-CoA + 2 NADPH + 2 H(+) = 22-methyltricosan-1-ol + 2 NADP(+) + CoA. It carries out the reaction 24-methylpentacosanoyl-CoA + 2 NADPH + 2 H(+) = 24-methylpentacosan-1-ol + 2 NADP(+) + CoA. Its function is as follows. Catalyzes the reduction of saturated but not unsaturated C16 or C18 fatty acyl-CoA to fatty alcohols (FAls). A lower activity can be observed with shorter fatty acyl-CoA substrates. Can produce very long-chain and ultra long-chain FAls, regardless of whether they have a straight or branched chain. Involved in the production of ether lipids/plasmalogens and wax monoesters whose synthesis requires FAls as substrates. In Homo sapiens (Human), this protein is Fatty acyl-CoA reductase 2.